A 388-amino-acid chain; its full sequence is Succinate--CoA ligase [ADP-forming] subunit beta (388 aa).

In terms of domain architecture, ATP-grasp spans 9-244 (KSLFAEYGLP…PSQDDAREAH (236 aa)). ATP-binding positions include Lys46, 53–55 (GRG), Glu99, Thr102, and Glu107. Positions 199 and 213 each coordinate Mg(2+). Residues Asn264 and 321-323 (GIV) each bind substrate.

It belongs to the succinate/malate CoA ligase beta subunit family. Heterotetramer of two alpha and two beta subunits. Requires Mg(2+) as cofactor.

It catalyses the reaction succinate + ATP + CoA = succinyl-CoA + ADP + phosphate. The enzyme catalyses GTP + succinate + CoA = succinyl-CoA + GDP + phosphate. The protein operates within carbohydrate metabolism; tricarboxylic acid cycle; succinate from succinyl-CoA (ligase route): step 1/1. In terms of biological role, succinyl-CoA synthetase functions in the citric acid cycle (TCA), coupling the hydrolysis of succinyl-CoA to the synthesis of either ATP or GTP and thus represents the only step of substrate-level phosphorylation in the TCA. The beta subunit provides nucleotide specificity of the enzyme and binds the substrate succinate, while the binding sites for coenzyme A and phosphate are found in the alpha subunit. The sequence is that of Succinate--CoA ligase [ADP-forming] subunit beta from Shewanella sp. (strain ANA-3).